Consider the following 204-residue polypeptide: MSFDNHLVPTVIEQSGRGERAFDIYSRLLKERIVFLVGPVTDESANLVVAQLLFLESENPDKDIFFYINSPGGSVTAGMSIYDTMNFIKPDVSTLCLGQAASMGAFLLSAGEKGKRFALPNSRIMIHQPLISGGLGGQASDIEIHARELLKIKEKLNRLMAKHCGRDLADLERDTDRDNFMSAEEAKEYGLIDQVLENRASLRL.

The active-site Nucleophile is the S102. H127 is an active-site residue.

The protein belongs to the peptidase S14 family. As to quaternary structure, fourteen ClpP subunits assemble into 2 heptameric rings which stack back to back to give a disk-like structure with a central cavity, resembling the structure of eukaryotic proteasomes.

Its subcellular location is the cytoplasm. It catalyses the reaction Hydrolysis of proteins to small peptides in the presence of ATP and magnesium. alpha-casein is the usual test substrate. In the absence of ATP, only oligopeptides shorter than five residues are hydrolyzed (such as succinyl-Leu-Tyr-|-NHMec, and Leu-Tyr-Leu-|-Tyr-Trp, in which cleavage of the -Tyr-|-Leu- and -Tyr-|-Trp bonds also occurs).. Functionally, cleaves peptides in various proteins in a process that requires ATP hydrolysis. Has a chymotrypsin-like activity. Plays a major role in the degradation of misfolded proteins. This chain is ATP-dependent Clp protease proteolytic subunit, found in Neisseria gonorrhoeae (strain ATCC 700825 / FA 1090).